The chain runs to 281 residues: MEPQQQQQQQGNEQQDSQGIGKINNGSGGSSFLCRQSSTRWTPTTDQIRILKDLYYNNGVRSPTAEQIQRISAKLRQYGKIEGKNVFYWFQNHKARERQKKRFTADHHHHMNVPTIHNHHYKPPPVYNKFSNMNSGSFPSSSNGSPGFLTTPGSHVGNYGYGSVAMEKSFRECTISSTTDANVGGSMSQNIAWIGINNEYHNPYTFIDTRKYMNGYDQTLEIEEEAEENYTAEIETLPLFPMHADIKQDTADYFNGRLENGCPRASLELTLNSWFGNSKYN.

Residues Met-1 to Asn-25 show a composition bias toward low complexity. The tract at residues Met-1–Ser-38 is disordered. Positions Gln-36–Lys-101 form a DNA-binding region, homeobox; WUS-type.

The protein belongs to the WUS homeobox family.

The protein localises to the nucleus. Its function is as follows. Transcription factor that plays a central role during developmental processes such as early embryogenesis and flowering, probably by regulating expression of specific genes. Required to specify stem cell identity in meristems, such as shoot apical meristem (SAM). May induce shoot stem cells activity in order to maintain the stem cell identity. The polypeptide is Protein WUSCHEL (WUS) (Antirrhinum majus (Garden snapdragon)).